Here is a 203-residue protein sequence, read N- to C-terminus: Large ribosomal subunit protein bL25 (203 aa).

It belongs to the bacterial ribosomal protein bL25 family. CTC subfamily. Part of the 50S ribosomal subunit; part of the 5S rRNA/L5/L18/L25 subcomplex. Contacts the 5S rRNA. Binds to the 5S rRNA independently of L5 and L18.

Its function is as follows. This is one of the proteins that binds to the 5S RNA in the ribosome where it forms part of the central protuberance. The protein is Large ribosomal subunit protein bL25 of Psychromonas ingrahamii (strain DSM 17664 / CCUG 51855 / 37).